The primary structure comprises 199 residues: uncharacterized protein (199 aa).

3 helical membrane passes run 22 to 44 (VVVV…YLFL), 65 to 87 (TGFI…HLAL), and 91 to 108 (HTIT…FFFW).

This sequence belongs to the ycf1 family.

Its subcellular location is the mitochondrion membrane. This is an uncharacterized protein from Arabidopsis thaliana (Mouse-ear cress).